Here is a 200-residue protein sequence, read N- to C-terminus: TATA-box-binding protein 2 (200 aa).

2 consecutive repeat copies span residues 25–101 (LQNI…ARIV) and 115–192 (IQNI…YPVL).

Belongs to the TBP family. As to quaternary structure, belongs to the TFIID complex together with the TBP-associated factors (TAFs). Binds DNA as monomer. Interacts with TAF1 (via N-terminus). Interacts with TFIIB1. Interacts with PTF2. Interacts with HAT5/ATHB-1 and ATHB-7. Component of a nuclear protein complex containing at least TATA binding proteins (TBPs, e.g. TBP1 and TBP2) and ATX1.

It localises to the nucleus. General transcription factor (GTF) that functions at the core of the DNA-binding multiprotein factor TFIID. Binding of TFIID to the TATA box is the initial transcriptional step of the pre-initiation complex (PIC), playing a role in the activation of eukaryotic genes transcribed by RNA polymerase II. Interacts with TFIIB1 and is required for activated transcription and possibly basal transcription. May act as GTF of RNA polymerase I-dependent transcription and rRNA synthesis. Forms a ternary complex with PBRP1 and the rDNA promoter region. This is TATA-box-binding protein 2 from Arabidopsis thaliana (Mouse-ear cress).